A 388-amino-acid chain; its full sequence is 3-amino-5-hydroxybenzoate synthase (388 aa).

N6-(pyridoxal phosphate)lysine is present on Lys-188.

Belongs to the degT/dnrJ/eryC1 family. Homodimer. Can interact with RifL. It depends on pyridoxal 5'-phosphate as a cofactor.

It catalyses the reaction 5-deoxy-5-amino-3-dehydroshikimate = 3-amino-5-hydroxybenzoate + H2O + H(+). It carries out the reaction UDP-3-oxo-alpha-D-glucose + L-glutamine = UDP-alpha-D-kanosamine + 2-oxoglutaramate. It participates in antibiotic biosynthesis; rifamycin B biosynthesis. AHBA synthase activity is activated by 3-deoxy-D-arabinoheptulosonic acid 7-phosphate (DAHP), an intermediate in the shikimate pathway, and is irreversibly inhibited by gabaculine (5-amino-1,3-cyclohexadiene-1-carboxylate). Its function is as follows. Catalyzes the dehydration and aromatization of 5-amino-5-deoxy-3-dehydroshikimate (aminoDHS) to 3-amino-5-hydroxybenzoate (AHBA), a compound that then serves as the starter unit for the assembly of a polyketide during the biosynthesis of rifamycin B and other ansamycin antibiotics. Cannot utilize 5-deoxy-5-amino-3-dehydroquinate (aminoDHQ), 5-deoxy-5-aminoshikimate (aminoSA), quinate, 3-dehydroquinate, or 3-dehydroshikimate (DHS) as substrate. In terms of biological role, in a complex with RifL, RifK may have a second function in the AHBA pathway, acting as a transaminase introducing the nitrogen into the first pathway intermediate, UDP-3-keto-D-glucose, to give UDP-kanosamine. Appears to use glutamine as the nitrogen donor; NH(4)(+) or asparagine are 30% less effective as nitrogen donors and neither glutamate nor aspartate show activity. The chain is 3-amino-5-hydroxybenzoate synthase (rifK) from Amycolatopsis mediterranei (strain S699) (Nocardia mediterranei).